The following is a 200-amino-acid chain: Probable GTP-binding protein EngB (200 aa).

The 175-residue stretch at 26–200 (SIPEVALAGR…IYEIAQCIKK (175 aa)) folds into the EngB-type G domain. GTP contacts are provided by residues 34–41 (GRSNVGKS), 61–65 (GCTRQ), 80–83 (DLPG), 147–150 (TKID), and 179–181 (VSS). Mg(2+)-binding residues include Ser-41 and Thr-63.

Belongs to the TRAFAC class TrmE-Era-EngA-EngB-Septin-like GTPase superfamily. EngB GTPase family. Requires Mg(2+) as cofactor.

Functionally, necessary for normal cell division and for the maintenance of normal septation. This Ehrlichia ruminantium (strain Welgevonden) protein is Probable GTP-binding protein EngB.